A 507-amino-acid polypeptide reads, in one-letter code: ATP synthase subunit alpha, chloroplastic (507 aa).

170–177 (GDRQTGKT) lines the ATP pocket.

The protein belongs to the ATPase alpha/beta chains family. F-type ATPases have 2 components, CF(1) - the catalytic core - and CF(0) - the membrane proton channel. CF(1) has five subunits: alpha(3), beta(3), gamma(1), delta(1), epsilon(1). CF(0) has four main subunits: a, b, b' and c.

The protein localises to the plastid. It is found in the chloroplast thylakoid membrane. It catalyses the reaction ATP + H2O + 4 H(+)(in) = ADP + phosphate + 5 H(+)(out). Functionally, produces ATP from ADP in the presence of a proton gradient across the membrane. The alpha chain is a regulatory subunit. The polypeptide is ATP synthase subunit alpha, chloroplastic (Buxus microphylla (Littleleaf boxwood)).